A 676-amino-acid polypeptide reads, in one-letter code: Palmitoyl-CoA ligase FUM16 (676 aa).

245–256 (IMYTSGSTGLPN) is an AMP binding site. The interval 552–655 (KLESIYRTSQ…SGLVTPTMKL (104 aa)) is AMP-binding.

It belongs to the ATP-dependent AMP-binding enzyme family.

It localises to the endoplasmic reticulum. The protein operates within mycotoxin biosynthesis. Functionally, palmitoyl-CoA ligase; part of the gene cluster that mediates the biosynthesis of fumonisins B1 (FB1), B2 (FB2), B3 (FB3), and B4 (FB4), which are carcinogenic mycotoxins. Plays a role in the synthesis of ceramide and is involved in self-protection from fumonisin B1 toxicity. The biosynthesis starts with the FUM1-catalyzed carbon chain assembly from one molecule of acetyl-CoA, eight molecules of malonyl-CoA, and two molecules of methionine (in S-adenosyl form). The C18 polyketide chain is released from the enzyme by a nucleophilic attack of a carbanion, which is derived from R-carbon of alanine by decarboxylation, on the carbonyl carbon of polyketide acyl chain. This step is catalyzed by the pyridoxal 5'-phosphate-dependent aminoacyl transferase FUM8. The resultant 3-keto intermediate is then stereospecifically reduced to a 3-hydroxyl product by reductase FUM13. Subsequent oxidations at C-10 by the cytochrome P450 monooxygenase FUM2, C-14 and C-15 by FUM6, FUM12 or FUM15, tricarballylic esterification of the hydroxyl groups on C-14 and C-15 by acyltransferase FUM14, and C-5 hydroxylation by 2-keto-glutarate-dependent dioxygenase FUM3 furnish the biosynthesis of fumonisins. The tricarballylic moieties are most likely derived from the citric acid cycle, and their addition to the carbon backbone may involve FUM7, FUM10, FUM11 and FUM14. This chain is Palmitoyl-CoA ligase FUM16, found in Gibberella moniliformis (strain M3125 / FGSC 7600) (Maize ear and stalk rot fungus).